Consider the following 461-residue polypeptide: Arginine biosynthesis bifunctional protein ArgJ, chloroplastic (461 aa).

Substrate is bound by residues T202, K228, T239, E326, N456, and T461. T239 serves as the catalytic Nucleophile.

It belongs to the ArgJ family. In terms of assembly, heterodimer of an alpha and a beta chain.

Its subcellular location is the plastid. The protein resides in the chloroplast. It carries out the reaction N(2)-acetyl-L-ornithine + L-glutamate = N-acetyl-L-glutamate + L-ornithine. The catalysed reaction is L-glutamate + acetyl-CoA = N-acetyl-L-glutamate + CoA + H(+). The protein operates within amino-acid biosynthesis; L-arginine biosynthesis; L-ornithine and N-acetyl-L-glutamate from L-glutamate and N(2)-acetyl-L-ornithine (cyclic): step 1/1. Its pathway is amino-acid biosynthesis; L-arginine biosynthesis; N(2)-acetyl-L-ornithine from L-glutamate: step 1/4. Its function is as follows. Catalyzes two activities which are involved in the cyclic version of arginine biosynthesis: the synthesis of acetylglutamate from glutamate and acetyl-CoA, and of ornithine by transacetylation between acetylornithine and glutamate. This Ostreococcus lucimarinus (strain CCE9901) protein is Arginine biosynthesis bifunctional protein ArgJ, chloroplastic.